Reading from the N-terminus, the 196-residue chain is Large ribosomal subunit protein mL66 (196 aa).

A mitochondrion-targeting transit peptide spans 1 to 34 (MAALNVLVSGCGRFLRGLLTGPTVTSWARPPARG).

It belongs to the bacterial ribosomal protein bS18 family. Mitochondrion-specific ribosomal protein mL66 subfamily. In terms of assembly, component of the mitochondrial ribosome small subunit (28S) which comprises a 12S rRNA and about 30 distinct proteins.

The protein resides in the mitochondrion. The polypeptide is Large ribosomal subunit protein mL66 (MRPS18A) (Bos taurus (Bovine)).